A 776-amino-acid polypeptide reads, in one-letter code: Genome polyprotein (776 aa).

The disordered stretch occupies residues 1 to 27 (MAGKAVLKGKGGGPPRRASKVAPKKTR). The Cytoplasmic portion of the chain corresponds to 1 to 98 (MAGKAVLKGK…LHRRGSRRTT (98 aa)). The span at 17 to 27 (RASKVAPKKTR) shows a compositional bias: basic residues. The hydrophobic; homodimerization of capsid protein C stretch occupies residues 33-68 (MPNGLVLMRMLGVLWHALTGTARSPVLKAFWKVVPL). Positions 97-117 (TTIDWMTPLLITVMLGMCLTA) are cleaved as a propeptide — ER anchor for the protein C, removed in mature form by serine protease NS3. The chain crosses the membrane as a helical span at residues 99–117 (IDWMTPLLITVMLGMCLTA). Residues 118-242 (TVRRERDGSM…HLTRVEGWVW (125 aa)) lie on the Extracellular side of the membrane. The N-linked (GlcNAc...) asparagine; by host glycan is linked to Asn-144. Residues 243-260 (KNKLFTLSLVMVAWLMVD) form a helical membrane-spanning segment. Residue Gly-261 is a topological domain, cytoplasmic. A helical membrane pass occupies residues 262–280 (LLPRILIVVVALALVPAYA). Residues 281-727 (SRCTHLENRD…HTVLGGAFNT (447 aa)) are Extracellular-facing. Cystine bridges form between Cys-283–Cys-310, Cys-340–Cys-396, Cys-354–Cys-385, and Cys-372–Cys-401. Asn-434 is a glycosylation site (N-linked (GlcNAc...) asparagine; by host). Intrachain disulfides connect Cys-466–Cys-570 and Cys-587–Cys-618. Positions 728–748 (LLGGVGFLPKILLGVAMAWLG) form an intramembrane region, helical. At 749-755 (LNMRNPT) the chain is on the extracellular side. An intramembrane region (helical) is located at residues 756-776 (LSMGFLLSGGLVLAMTLGVGA).

Specific enzymatic cleavages in vivo yield mature proteins Peptide 2K acts as a signal sequence and is removed from the N-terminus of NS4B by the host signal peptidase in the ER lumen. Signal cleavage at the 2K-4B site requires a prior NS3 protease-mediated cleavage at the 4A-2K site.

It is found in the virion. Its subcellular location is the secreted. The protein resides in the virion membrane. The protein localises to the host endoplasmic reticulum membrane. Its function is as follows. Capsid protein C self-assembles to form an icosahedral capsid about 30 nm in diameter. The capsid encapsulates the genomic RNA. Functionally, prM acts as a chaperone for envelope protein E during intracellular virion assembly by masking and inactivating envelope protein E fusion peptide. prM is matured in the last step of virion assembly, presumably to avoid catastrophic activation of the viral fusion peptide induced by the acidic pH of the trans-Golgi network. After cleavage by host furin, the pr peptide is released in the extracellular medium and small envelope protein M and envelope protein E homodimers are dissociated. Envelope protein E binding to host cell surface receptor is followed by virus internalization through clathrin-mediated endocytosis. Envelope protein E is subsequently involved in membrane fusion between virion and host late endosomes. Synthesized as a homodimer with prM which acts as a chaperone for envelope protein E. After cleavage of prM, envelope protein E dissociate from small envelope protein M and homodimerizes. The chain is Genome polyprotein from Homo sapiens (Human).